Reading from the N-terminus, the 548-residue chain is Glucose-6-phosphate isomerase (548 aa).

Glu-355 (proton donor) is an active-site residue. Residues His-386 and Lys-514 contribute to the active site.

It belongs to the GPI family.

It localises to the cytoplasm. The enzyme catalyses alpha-D-glucose 6-phosphate = beta-D-fructose 6-phosphate. It functions in the pathway carbohydrate biosynthesis; gluconeogenesis. Its pathway is carbohydrate degradation; glycolysis; D-glyceraldehyde 3-phosphate and glycerone phosphate from D-glucose: step 2/4. Functionally, catalyzes the reversible isomerization of glucose-6-phosphate to fructose-6-phosphate. This is Glucose-6-phosphate isomerase from Photorhabdus laumondii subsp. laumondii (strain DSM 15139 / CIP 105565 / TT01) (Photorhabdus luminescens subsp. laumondii).